The chain runs to 392 residues: LL-diaminopimelate aminotransferase (392 aa).

The substrate site is built by tyrosine 13 and glycine 38. Pyridoxal 5'-phosphate is bound by residues tyrosine 67, 102-103 (SK), tyrosine 127, asparagine 177, tyrosine 208, and 236-238 (SCS). Residues lysine 103, tyrosine 127, and asparagine 177 each coordinate substrate. An N6-(pyridoxal phosphate)lysine modification is found at lysine 239. Arginine 247 contacts pyridoxal 5'-phosphate. Arginine 366 serves as a coordination point for substrate.

It belongs to the class-I pyridoxal-phosphate-dependent aminotransferase family. LL-diaminopimelate aminotransferase subfamily. As to quaternary structure, homodimer. Requires pyridoxal 5'-phosphate as cofactor.

The enzyme catalyses (2S,6S)-2,6-diaminopimelate + 2-oxoglutarate = (S)-2,3,4,5-tetrahydrodipicolinate + L-glutamate + H2O + H(+). Its pathway is amino-acid biosynthesis; L-lysine biosynthesis via DAP pathway; LL-2,6-diaminopimelate from (S)-tetrahydrodipicolinate (aminotransferase route): step 1/1. Its function is as follows. Involved in the synthesis of meso-diaminopimelate (m-DAP or DL-DAP), required for both lysine and peptidoglycan biosynthesis. Catalyzes the direct conversion of tetrahydrodipicolinate to LL-diaminopimelate. Can also use m-DAP instead of LL-DAP as the amino-group donor. The sequence is that of LL-diaminopimelate aminotransferase from Gloeobacter violaceus (strain ATCC 29082 / PCC 7421).